The chain runs to 41 residues: Photosystem I reaction center subunit IX (41 aa).

The chain crosses the membrane as a helical span at residues 7-27 (YLSTAPVVATGWFIVTAALLI).

The protein belongs to the PsaJ family.

Its subcellular location is the plastid. It is found in the chloroplast thylakoid membrane. Its function is as follows. May help in the organization of the PsaE and PsaF subunits. In Tetradesmus obliquus (Green alga), this protein is Photosystem I reaction center subunit IX.